Reading from the N-terminus, the 328-residue chain is GTP 3',8-cyclase (328 aa).

One can recognise a Radical SAM core domain in the interval 9–229 (GFGRDVRYLR…DNGLNTGGPA (221 aa)). GTP is bound at residue Arg18. 2 residues coordinate [4Fe-4S] cluster: Cys25 and Cys29. An S-adenosyl-L-methionine-binding site is contributed by Tyr31. Cys32 is a [4Fe-4S] cluster binding site. Arg60 contributes to the GTP binding site. An S-adenosyl-L-methionine-binding site is contributed by Gly64. Thr94 provides a ligand contact to GTP. Ser118 serves as a coordination point for S-adenosyl-L-methionine. Lys154 contributes to the GTP binding site. Position 188 (Met188) interacts with S-adenosyl-L-methionine. [4Fe-4S] cluster is bound by residues Cys252 and Cys255. A GTP-binding site is contributed by 257-259 (RVR). Residue Cys269 participates in [4Fe-4S] cluster binding.

This sequence belongs to the radical SAM superfamily. MoaA family. As to quaternary structure, monomer and homodimer. It depends on [4Fe-4S] cluster as a cofactor.

It catalyses the reaction GTP + AH2 + S-adenosyl-L-methionine = (8S)-3',8-cyclo-7,8-dihydroguanosine 5'-triphosphate + 5'-deoxyadenosine + L-methionine + A + H(+). It participates in cofactor biosynthesis; molybdopterin biosynthesis. Functionally, catalyzes the cyclization of GTP to (8S)-3',8-cyclo-7,8-dihydroguanosine 5'-triphosphate. This Rhodobacter capsulatus (Rhodopseudomonas capsulata) protein is GTP 3',8-cyclase.